A 669-amino-acid chain; its full sequence is Probable serine/threonine-protein kinase DDB_G0291918 (669 aa).

Residues 13-360 (YNNIKELGRG…LKETLNHPFL (348 aa)) enclose the Protein kinase domain. Residues 19-27 (LGRGVSGVV) and K42 each bind ATP. Catalysis depends on D141, which acts as the Proton acceptor. Low complexity predominate over residues 396–405 (QNQQQQQQQQ). Disordered regions lie at residues 396–518 (QNQQ…APTF) and 530–550 (FPKL…MNWR). Polar residues predominate over residues 406-418 (KSFSTSSLPQVNH). 2 stretches are compositionally biased toward low complexity: residues 419–449 (NNDT…NNNN) and 457–494 (QSNN…SSTD).

This sequence belongs to the protein kinase superfamily. Ser/Thr protein kinase family.

The enzyme catalyses L-seryl-[protein] + ATP = O-phospho-L-seryl-[protein] + ADP + H(+). It catalyses the reaction L-threonyl-[protein] + ATP = O-phospho-L-threonyl-[protein] + ADP + H(+). The polypeptide is Probable serine/threonine-protein kinase DDB_G0291918 (Dictyostelium discoideum (Social amoeba)).